Here is a 1026-residue protein sequence, read N- to C-terminus: Leucine-rich repeat and coiled-coil domain-containing protein 1 (1026 aa).

LRR repeat units follow at residues 39-60 (SIHA…DHIW), 61-82 (NLRH…NTLT), 83-104 (KLCT…EALV), 105-126 (NLTK…MPLH), and 131-152 (KLRY…LQCT). The region spanning 170-212 (NPICLIPGYRAIILQTLPQLRILDCKNIFGEPVSLEEINSSHL) is the LRRCT domain. The disordered stretch occupies residues 310–338 (DNVPEKDLRPKRDTDITSESDYGNRRECS). Residues 312–324 (VPEKDLRPKRDTD) are compositionally biased toward basic and acidic residues. Residues 428–641 (REMRWKAEQT…DLENEFRIAL (214 aa)) adopt a coiled-coil conformation.

It belongs to the LRRCC1 family.

The protein localises to the cytoplasm. Its subcellular location is the cytoskeleton. The protein resides in the microtubule organizing center. It localises to the centrosome. It is found in the centriole. Its function is as follows. Required for the organization of the mitotic spindle. Maintains the structural integrity of centrosomes during mitosis. This Mus musculus (Mouse) protein is Leucine-rich repeat and coiled-coil domain-containing protein 1 (Lrrcc1).